The following is a 152-amino-acid chain: Dehydratase aurZ (152 aa).

Positions 34-129 (PSLSEKEYRH…APDHVNFADT (96 aa)) constitute an EthD domain.

Belongs to the tpcK family.

It carries out the reaction naphtopyrone YWA1 = norrubrofusarin + H2O + H(+). Its pathway is pigment biosynthesis. Functionally, dehydratase; part of the gene cluster that mediates the biosynthesis of aurofusarin, a red mycelium pigment which is acting as a mycotoxin. The first step is performed by the polyketide synthase which condenses one acetyl-CoA and 6 malonyl-CoA units to form the first intermediate, the cyclic heptaketide and yellow pigment YWA1. The C2 hydroxyl group in the pyrone ring of YWA1 is probably formed during ring closure by an aldol-type cyclization reaction. The dehydratase aurZ then acts as the first tailoring enzyme in the aurofusarin biosynthetic pathway by converting YWA1 to nor-rubrofusarin. Nor-rubrofusarin is then methylated to rubrofusarin by the O-methyltransferase aurJ. Rubrofusarin is then transported across the plasma membrane by the rubrofusarin-specific pump aurT for further enzymatic processing by the extracellular complex composed of GIP1, aurF, aurO and aurS to yield aurofusarin. This Gibberella zeae (strain ATCC MYA-4620 / CBS 123657 / FGSC 9075 / NRRL 31084 / PH-1) (Wheat head blight fungus) protein is Dehydratase aurZ.